A 355-amino-acid chain; its full sequence is Butyrate kinase 1 (355 aa).

The protein belongs to the acetokinase family.

The protein resides in the cytoplasm. The enzyme catalyses butanoate + ATP = butanoyl phosphate + ADP. It participates in lipid metabolism; butanoate metabolism. In terms of biological role, catalyzes the conversion of butyryl-CoA through butyryl phosphate to butyrate. This Clostridium acetobutylicum (strain ATCC 824 / DSM 792 / JCM 1419 / IAM 19013 / LMG 5710 / NBRC 13948 / NRRL B-527 / VKM B-1787 / 2291 / W) protein is Butyrate kinase 1 (buk1).